We begin with the raw amino-acid sequence, 312 residues long: MEIIFYHPTFNAAWWVNALEKALPHARVREWKVGDNNPADYALVWQPPVEMLAGRRLKAVFALGAGVDAILSKLNAHPEMLDASIPLFRLEDTGMGLQMQEYAVSQVLHWFRRFDDYQALKNQALWKPLPEYTREEFSVGIMGAGVLGAKVAESLQAWGFPLRCWSRSRKSWPGVESYVGREELHAFLNQTRVLINLLPNTAQTVGIINSELLDQLPDGAYVLNLARGVHVQEADLLAALDSGKLKGAMLDVFSQEPLPQESPLWRHPRVAMTPHIAAVTRPAEAIDYISRTITQLEKGEPVTGQVDRARGY.

The active site involves R227. H275 functions as the Proton donor in the catalytic mechanism.

This sequence belongs to the D-isomer specific 2-hydroxyacid dehydrogenase family. GhrA subfamily.

It is found in the cytoplasm. It carries out the reaction glycolate + NADP(+) = glyoxylate + NADPH + H(+). The catalysed reaction is (R)-glycerate + NAD(+) = 3-hydroxypyruvate + NADH + H(+). It catalyses the reaction (R)-glycerate + NADP(+) = 3-hydroxypyruvate + NADPH + H(+). Functionally, catalyzes the NADPH-dependent reduction of glyoxylate and hydroxypyruvate into glycolate and glycerate, respectively. In Salmonella agona (strain SL483), this protein is Glyoxylate/hydroxypyruvate reductase A.